Consider the following 209-residue polypeptide: NAD(P)H-quinone oxidoreductase subunit I (209 aa).

2 4Fe-4S ferredoxin-type domains span residues 55 to 84 (GRIH…VDYE) and 95 to 124 (NSYS…MTEE). The [4Fe-4S] cluster site is built by Cys64, Cys67, Cys70, Cys74, Cys104, Cys107, Cys110, and Cys114.

Belongs to the complex I 23 kDa subunit family. As to quaternary structure, NDH-1 is composed of at least 11 different subunits. [4Fe-4S] cluster serves as cofactor.

Its subcellular location is the cell inner membrane. It carries out the reaction a plastoquinone + NADH + (n+1) H(+)(in) = a plastoquinol + NAD(+) + n H(+)(out). It catalyses the reaction a plastoquinone + NADPH + (n+1) H(+)(in) = a plastoquinol + NADP(+) + n H(+)(out). Its function is as follows. NDH-1 shuttles electrons from an unknown electron donor, via FMN and iron-sulfur (Fe-S) centers, to quinones in the respiratory and/or the photosynthetic chain. The immediate electron acceptor for the enzyme in this species is believed to be plastoquinone. Couples the redox reaction to proton translocation, and thus conserves the redox energy in a proton gradient. This chain is NAD(P)H-quinone oxidoreductase subunit I, found in Gloeobacter violaceus (strain ATCC 29082 / PCC 7421).